The chain runs to 240 residues: 1-(5-phosphoribosyl)-5-[(5-phosphoribosylamino)methylideneamino] imidazole-4-carboxamide isomerase (240 aa).

The active-site Proton acceptor is the aspartate 9. The Proton donor role is filled by aspartate 131.

Belongs to the HisA/HisF family.

The protein resides in the cytoplasm. The enzyme catalyses 1-(5-phospho-beta-D-ribosyl)-5-[(5-phospho-beta-D-ribosylamino)methylideneamino]imidazole-4-carboxamide = 5-[(5-phospho-1-deoxy-D-ribulos-1-ylimino)methylamino]-1-(5-phospho-beta-D-ribosyl)imidazole-4-carboxamide. The protein operates within amino-acid biosynthesis; L-histidine biosynthesis; L-histidine from 5-phospho-alpha-D-ribose 1-diphosphate: step 4/9. The protein is 1-(5-phosphoribosyl)-5-[(5-phosphoribosylamino)methylideneamino] imidazole-4-carboxamide isomerase of Azobacteroides pseudotrichonymphae genomovar. CFP2.